Here is an 859-residue protein sequence, read N- to C-terminus: Rod cGMP-specific 3',5'-cyclic phosphodiesterase subunit alpha (859 aa).

Gly-2 carries the N-acetylglycine modification. 2 GAF domains span residues 73–222 and 254–431; these read QAEK…NLIM and DIER…GWSV. One can recognise a PDEase domain in the interval 483–816; the sequence is EEEELAEILQ…KEWKALADEY (334 aa). The active-site Proton donor is the His-559. Residues His-563, His-599, Asp-600, and Asp-720 each contribute to the a divalent metal cation site. The tract at residues 821–859 is disordered; that stretch reads KGLEEEKQKQQAANQAAAGSQHGGKQPGGGPASKSCCVQ. Residues 830–840 are compositionally biased toward low complexity; sequence QQAANQAAAGS. Gly residues predominate over residues 841–851; the sequence is QHGGKQPGGGP. Cys-856 is subject to Cysteine methyl ester. Cys-856 carries the S-farnesyl cysteine lipid modification. Positions 857 to 859 are cleaved as a propeptide — removed in mature form; sequence CVQ.

It belongs to the cyclic nucleotide phosphodiesterase family. In terms of assembly, oligomer composed of two catalytic chains (alpha and beta), an inhibitory chain (gamma) and the delta chain. Requires a divalent metal cation as cofactor.

The protein localises to the cell membrane. It is found in the cell projection. It localises to the cilium. Its subcellular location is the photoreceptor outer segment. The enzyme catalyses 3',5'-cyclic GMP + H2O = GMP + H(+). In terms of biological role, rod-specific cGMP phosphodiesterase that catalyzes the hydrolysis of 3',5'-cyclic GMP. This protein participates in processes of transmission and amplification of the visual signal. The sequence is that of Rod cGMP-specific 3',5'-cyclic phosphodiesterase subunit alpha from Bos taurus (Bovine).